A 72-amino-acid polypeptide reads, in one-letter code: Alpha-elapitoxin-Dpp2c (72 aa).

5 cysteine pairs are disulfide-bonded: Cys3–Cys21, Cys14–Cys42, Cys27–Cys31, Cys46–Cys57, and Cys58–Cys63.

It belongs to the three-finger toxin family. Long-chain subfamily. Type II alpha-neurotoxin sub-subfamily. Expressed by the venom gland.

Its subcellular location is the secreted. Functionally, binds with high affinity to muscular (alpha-1/CHRNA1) and neuronal (alpha-7/CHRNA7) nicotinic acetylcholine receptor (nAChR) and inhibits acetylcholine from binding to the receptor, thereby impairing neuromuscular and neuronal transmission. The chain is Alpha-elapitoxin-Dpp2c from Dendroaspis polylepis polylepis (Black mamba).